A 487-amino-acid chain; its full sequence is N-succinylglutamate 5-semialdehyde dehydrogenase (487 aa).

221–226 is an NAD(+) binding site; it reads GSSDTG. Residues Glu-244 and Cys-278 contribute to the active site.

Belongs to the aldehyde dehydrogenase family. AstD subfamily.

The catalysed reaction is N-succinyl-L-glutamate 5-semialdehyde + NAD(+) + H2O = N-succinyl-L-glutamate + NADH + 2 H(+). The protein operates within amino-acid degradation; L-arginine degradation via AST pathway; L-glutamate and succinate from L-arginine: step 4/5. In terms of biological role, catalyzes the NAD-dependent reduction of succinylglutamate semialdehyde into succinylglutamate. In Burkholderia multivorans (strain ATCC 17616 / 249), this protein is N-succinylglutamate 5-semialdehyde dehydrogenase.